Here is a 244-residue protein sequence, read N- to C-terminus: Carbonic anhydrase (244 aa).

An N-terminal signal peptide occupies residues 1 to 19 (MKGKFSIALMLSACFSASA). The region spanning 23 to 244 (VHWGYEGSGD…QPLNGRIIIH (222 aa)) is the Alpha-carbonic anhydrase domain. A disulfide bridge links cysteine 46 with cysteine 199. Histidine 84 (proton acceptor) is an active-site residue. Zn(2+) contacts are provided by histidine 109, histidine 111, and histidine 128. 195–196 (TT) provides a ligand contact to substrate.

This sequence belongs to the alpha-carbonic anhydrase family. Requires Zn(2+) as cofactor.

It localises to the periplasm. It carries out the reaction hydrogencarbonate + H(+) = CO2 + H2O. Functionally, reversible hydration of carbon dioxide. The chain is Carbonic anhydrase (cah) from Pectobacterium atrosepticum (strain SCRI 1043 / ATCC BAA-672) (Erwinia carotovora subsp. atroseptica).